Here is a 218-residue protein sequence, read N- to C-terminus: Large ribosomal subunit protein uL3 (218 aa).

The protein belongs to the universal ribosomal protein uL3 family. As to quaternary structure, part of the 50S ribosomal subunit. Forms a cluster with proteins L14 and L19.

Functionally, one of the primary rRNA binding proteins, it binds directly near the 3'-end of the 23S rRNA, where it nucleates assembly of the 50S subunit. The sequence is that of Large ribosomal subunit protein uL3 from Corynebacterium efficiens (strain DSM 44549 / YS-314 / AJ 12310 / JCM 11189 / NBRC 100395).